The primary structure comprises 286 residues: ATP synthase gamma chain (286 aa).

This sequence belongs to the ATPase gamma chain family. As to quaternary structure, F-type ATPases have 2 components, CF(1) - the catalytic core - and CF(0) - the membrane proton channel. CF(1) has five subunits: alpha(3), beta(3), gamma(1), delta(1), epsilon(1). CF(0) has three main subunits: a, b and c.

Its subcellular location is the cell inner membrane. Its function is as follows. Produces ATP from ADP in the presence of a proton gradient across the membrane. The gamma chain is believed to be important in regulating ATPase activity and the flow of protons through the CF(0) complex. The protein is ATP synthase gamma chain of Alcanivorax borkumensis (strain ATCC 700651 / DSM 11573 / NCIMB 13689 / SK2).